A 1526-amino-acid chain; its full sequence is Myosin type-2 heavy chain 1 (1526 aa).

Residues 22–73 (DDKRWVWISDPETAFTKAWIKEDLPDKKYVVRYNNSRDEKIVGEDEIDPVNP) enclose the Myosin N-terminal SH3-like domain. In terms of domain architecture, Myosin motor spans 77-755 (DRVNDMAELT…VLAELEERRV (679 aa)). 170-177 (GESGAGKT) provides a ligand contact to ATP. 2 actin-binding regions span residues 634–656 (LNQL…VPNE) and 734–748 (RIGV…GVLA). The region spanning 758–787 (LQRLMTMLQTRIRGFLQRKIFQKRLKDIQA) is the IQ domain. Residues 875–1244 (ALDKEEILRR…SLTKQVNELS (370 aa)) are a coiled coil. At Ser-1044 the chain carries Phosphoserine.

This sequence belongs to the TRAFAC class myosin-kinesin ATPase superfamily. Myosin family. As to quaternary structure, binds to cdc4 and rlc1.

Required for cell division. It is a component of the cdc12 'spot', a structure thought to mark the site of septation. May work in conjunction with myo3. The protein is Myosin type-2 heavy chain 1 (myo2) of Schizosaccharomyces pombe (strain 972 / ATCC 24843) (Fission yeast).